A 245-amino-acid polypeptide reads, in one-letter code: uncharacterized protein (245 aa).

The N-terminal stretch at 1-20 is a signal peptide; that stretch reads MIKQTIVALLLSVGASSVFA.

This sequence to E.coli YmcB.

This is an uncharacterized protein from Escherichia coli (strain K12).